The sequence spans 334 residues: Putative carboxypeptidase VC_A0337 (334 aa).

Catalysis depends on serine 112, which acts as the Nucleophile. Catalysis depends on charge relay system residues glutamate 234 and histidine 302.

Belongs to the peptidase S66 family.

The polypeptide is Putative carboxypeptidase VC_A0337 (Vibrio cholerae serotype O1 (strain ATCC 39315 / El Tor Inaba N16961)).